The following is a 1230-amino-acid chain: Serine/threonine-protein kinase PDK1 (1230 aa).

The segment at 1 to 277 (MASSHFGPAS…ASSGALKKHS (277 aa)) is disordered. The span at 34–50 (SSSSSSRSTTTCSSTSS) shows a compositional bias: low complexity. Residues 62 to 76 (ETSTAATSRSQLPSN) show a composition bias toward polar residues. Residues 77–87 (RHSENEAEHDT) show a composition bias toward basic and acidic residues. 2 stretches are compositionally biased toward polar residues: residues 107 to 117 (PRSNRLGTSPQ) and 140 to 175 (SKRQ…SSTI). Over residues 185–202 (PNDRLSHDRESHSAERPR) the composition is skewed to basic and acidic residues. Polar residues predominate over residues 217-226 (STPSSPTNSY). Positions 252–262 (ARDGDDRERRQ) are enriched in basic and acidic residues. The region spanning 281-801 (WVLGEELGVG…ITFIKTHPFF (521 aa)) is the Protein kinase domain. ATP-binding positions include 291 to 293 (SYS) and lysine 319. Disordered regions lie at residues 345–522 (LSDP…RSGA) and 534–597 (TLPP…KMSA). 2 stretches are compositionally biased toward polar residues: residues 378–397 (TASI…TVSN) and 408–433 (IVTT…SPTA). Basic and acidic residues-rich tracts occupy residues 466–494 (GGED…DNMT) and 502–521 (VREE…ERSG). Pro residues predominate over residues 535–544 (LPPPQIPSTP). Residues 555–569 (DGHRTSRETPRDRPH) are compositionally biased toward basic and acidic residues. Residues 621 to 623 (SLA) and glutamate 627 contribute to the ATP site. Residue aspartate 666 is the Proton acceptor of the active site. The ATP site is built by glutamate 670 and aspartate 684. The segment covering 850–859 (EDEDGFEYDA) has biased composition (acidic residues). 4 disordered regions span residues 850-871 (EDED…GGAV), 907-955 (LGED…GGNR), 972-1035 (GGGM…SDEA), and 1116-1152 (EADG…GGGH). A compositionally biased stretch (basic and acidic residues) spans 927–942 (GKREKEVEKKKGEKAR). Composition is skewed to low complexity over residues 977–992 (GSAT…RTPG), 1002–1030 (RPGS…GASM), and 1120–1137 (DPAG…SHVE). The span at 1138–1152 (SGGGGVGGGGRGGGH) shows a compositional bias: gly residues.

It belongs to the protein kinase superfamily. AGC Ser/Thr protein kinase family. PDPK1 subfamily.

The catalysed reaction is L-seryl-[protein] + ATP = O-phospho-L-seryl-[protein] + ADP + H(+). It carries out the reaction L-threonyl-[protein] + ATP = O-phospho-L-threonyl-[protein] + ADP + H(+). Functionally, serine/threonine-protein kinase that functions in the sphingolipid-mediated signaling pathway, regulating organization of the plasma membrane. May phosphorylate PKC1 to activate the cell integrity MAPK cascade during cell wall and membrane stress. May regulate sphingolipid metabolism upstream of YPK1. This is Serine/threonine-protein kinase PDK1 from Cryptococcus neoformans var. grubii serotype A (strain H99 / ATCC 208821 / CBS 10515 / FGSC 9487) (Filobasidiella neoformans var. grubii).